Consider the following 563-residue polypeptide: MDTKHLIASEIQKVVPDMEQSTILSLLETPKNSSMGDLAFPAFSLAKTLRKAPQIIASDIAEQIKSDQFEKVEAVGPYVNFFLDKAAISSQVLKQVLSDGSAYATQNIGEGRNVAIDMSSPNIAKPFSIGHLRSTVIGDSLANIFDKIGYHPVKINHLGDWGKQFGMLIVAYKKWGNEEAVRAHPIDELLKLYVRINAEAETDPSVDEEAREWFRKLEANDPEATELWQWFRDESLLEFNRLYDKMNVTFDSYNGEAFYNDKMEEVLELLESKNLLVESKGAQVVNLEKYGIEHPALIKKSDGATLYITRDLAAALYRRRTYDFAKSIYVVGNEQSAHFKQLKAVLKEMDYDWSDDMTHVPFGLVTKGGAKLSTRKGNVILLEPTVAEAINRAASQIEAKNPNLADKDKVAQAVGVGAIKFYDLKTDRTNGYDFDLEAMVSFEGETGPYVQYAHARIQSILRKANFNPSNSDNYSLNDVESWEIIKLIQDFPRIIVRAADNFEPSIIAKFAINLAQCFNKYYAHTRILDEDAEISSRLALCYATATVLKESLRLLGVDAPNEM.

Positions 121–131 match the 'HIGH' region motif; sequence PNIAKPFSIGH.

It belongs to the class-I aminoacyl-tRNA synthetase family. Monomer.

It localises to the cytoplasm. It carries out the reaction tRNA(Arg) + L-arginine + ATP = L-arginyl-tRNA(Arg) + AMP + diphosphate. This is Arginine--tRNA ligase from Streptococcus agalactiae serotype Ia (strain ATCC 27591 / A909 / CDC SS700).